The primary structure comprises 151 residues: Putative pre-16S rRNA nuclease (151 aa).

The protein belongs to the YqgF nuclease family.

The protein resides in the cytoplasm. Could be a nuclease involved in processing of the 5'-end of pre-16S rRNA. This is Putative pre-16S rRNA nuclease from Prochlorococcus marinus subsp. pastoris (strain CCMP1986 / NIES-2087 / MED4).